The following is a 159-amino-acid chain: Ribosomal RNA large subunit methyltransferase H (159 aa).

Residues Leu-76, Gly-108, and 127–132 (FGQLTL) contribute to the S-adenosyl-L-methionine site.

Belongs to the RNA methyltransferase RlmH family. As to quaternary structure, homodimer.

It localises to the cytoplasm. It carries out the reaction pseudouridine(1915) in 23S rRNA + S-adenosyl-L-methionine = N(3)-methylpseudouridine(1915) in 23S rRNA + S-adenosyl-L-homocysteine + H(+). Its function is as follows. Specifically methylates the pseudouridine at position 1915 (m3Psi1915) in 23S rRNA. The chain is Ribosomal RNA large subunit methyltransferase H from Streptococcus gordonii (strain Challis / ATCC 35105 / BCRC 15272 / CH1 / DL1 / V288).